Here is a 117-residue protein sequence, read N- to C-terminus: Envelope glycoprotein J (117 aa).

A signal peptide spans 1–26; it reads MRSLLFVVGAWVAAAVTHLTPNAALA. Positions 26–64 are disordered; sequence ATGTTPTVGANSTADPGTGANGTTVPAAGTPANSTTAAE. A compositionally biased stretch (polar residues) spans 27-40; it reads TGTTPTVGANSTAD. Over 27-73 the chain is Extracellular; the sequence is TGTTPTVGANSTADPGTGANGTTVPAAGTPANSTTAAETPAPFPPVD. N-linked (GlcNAc...) asparagine; by host glycosylation is found at Asn-36, Asn-46, and Asn-58. A helical membrane pass occupies residues 74-94; it reads FALPVVIGGLCALTLAAMGAG. Topologically, residues 95–117 are cytoplasmic; it reads ALLHRCCRRAAARRRQRAAYVYA.

It belongs to the alphaherpesvirinae glycoprotein J family.

It is found in the host Golgi apparatus membrane. It localises to the host endoplasmic reticulum membrane. The protein localises to the host endosome membrane. Its function is as follows. Inhibits host cell apoptosis. Induces an increase in reactive oxygen species (ROS) in the host cell. The chain is Envelope glycoprotein J (gJ) from Homo sapiens (Human).